The sequence spans 218 residues: uncharacterized protein (218 aa).

The N-terminal stretch at 1–17 (MLKKIIILFLGIFLLSS) is a signal peptide. Cys18 carries the N-palmitoyl cysteine lipid modification. Cys18 carries the S-diacylglycerol cysteine lipid modification. Residues 136–164 (YKEKKIEEELNQIKAMLKETKRDITKYTC) adopt a coiled-coil conformation.

The protein resides in the cell membrane. This is an uncharacterized protein from Rickettsia typhi (strain ATCC VR-144 / Wilmington).